We begin with the raw amino-acid sequence, 244 residues long: RAD51-like protein 1 (244 aa).

Interacts with brc-2 and rad-51.

It is found in the nucleus. Functionally, has a role in the homologous recombination repair (HRR) of genomic DNA during meiosis. Required for rad-51 recruitment onto ssDNA gaps generated at stalled replication fork barriers. The protein is RAD51-like protein 1 of Caenorhabditis briggsae.